Consider the following 230-residue polypeptide: 2,3-bisphosphoglycerate-dependent phosphoglycerate mutase (230 aa).

Substrate-binding positions include 8-15, 21-22, Arg60, 87-90, Lys98, 114-115, and 183-184; these read RHGESEWN, TG, ERHY, RR, and GN. Residue His9 is the Tele-phosphohistidine intermediate of the active site. Glu87 acts as the Proton donor/acceptor in catalysis.

This sequence belongs to the phosphoglycerate mutase family. BPG-dependent PGAM subfamily.

It catalyses the reaction (2R)-2-phosphoglycerate = (2R)-3-phosphoglycerate. It participates in carbohydrate degradation; glycolysis; pyruvate from D-glyceraldehyde 3-phosphate: step 3/5. Its function is as follows. Catalyzes the interconversion of 2-phosphoglycerate and 3-phosphoglycerate. The sequence is that of 2,3-bisphosphoglycerate-dependent phosphoglycerate mutase from Streptococcus pneumoniae (strain ATCC BAA-255 / R6).